A 214-amino-acid chain; its full sequence is 3,4-dihydroxy-2-butanone 4-phosphate synthase (214 aa).

D-ribulose 5-phosphate-binding positions include 40-41, Asp45, 153-157, and Glu177; these read RE and RRGHT. Residue Glu41 participates in Mg(2+) binding. His156 provides a ligand contact to Mg(2+).

The protein belongs to the DHBP synthase family. In terms of assembly, homodimer. Requires Mg(2+) as cofactor. Mn(2+) is required as a cofactor.

It carries out the reaction D-ribulose 5-phosphate = (2S)-2-hydroxy-3-oxobutyl phosphate + formate + H(+). It participates in cofactor biosynthesis; riboflavin biosynthesis; 2-hydroxy-3-oxobutyl phosphate from D-ribulose 5-phosphate: step 1/1. In terms of biological role, catalyzes the conversion of D-ribulose 5-phosphate to formate and 3,4-dihydroxy-2-butanone 4-phosphate. In Rhodospirillum rubrum (strain ATCC 11170 / ATH 1.1.1 / DSM 467 / LMG 4362 / NCIMB 8255 / S1), this protein is 3,4-dihydroxy-2-butanone 4-phosphate synthase.